Reading from the N-terminus, the 233-residue chain is MAETEGFGDSGSKQLFAGLSNVSISGDIPVEGEITVPMASTSQEDDLSTLDEPVKDTIMRDLKAVGNKFLHVMYPKKSTTLLRDWDLWGPLVLCVSLALMLQGGNADSKDDGGPQFAEVFVIIWFGAVVITLNSKLLGGTISFFQSLCVLGYCILPLTVAMLVCRLVLLLSHTTASFIVRLVVVTVMFAWSTFASTAFLADSQPPNRRALAVYPIFLFYFVISWMVLTFNTVS.

Residues 1-84 are Cytoplasmic-facing; it reads MAETEGFGDS…PKKSTTLLRD (84 aa). Residues 85 to 105 form a helical membrane-spanning segment; it reads WDLWGPLVLCVSLALMLQGGN. Residues 106–111 lie on the Lumenal side of the membrane; the sequence is ADSKDD. The helical transmembrane segment at 112–132 threads the bilayer; sequence GGPQFAEVFVIIWFGAVVITL. The Cytoplasmic segment spans residues 133 to 142; the sequence is NSKLLGGTIS. Residues 143 to 163 traverse the membrane as a helical segment; the sequence is FFQSLCVLGYCILPLTVAMLV. Over 164 to 180 the chain is Lumenal; it reads CRLVLLLSHTTASFIVR. The chain crosses the membrane as a helical span at residues 181-201; it reads LVVVTVMFAWSTFASTAFLAD. The Cytoplasmic portion of the chain corresponds to 202-208; that stretch reads SQPPNRR. A helical transmembrane segment spans residues 209–229; sequence ALAVYPIFLFYFVISWMVLTF. Residues 230–233 lie on the Lumenal side of the membrane; the sequence is NTVS.

The protein belongs to the YIP1 family.

Its subcellular location is the golgi apparatus membrane. The protein is Protein YIPF6 (yipf6) of Xenopus tropicalis (Western clawed frog).